We begin with the raw amino-acid sequence, 337 residues long: DNA-directed RNA polymerase subunit alpha (337 aa).

An alpha N-terminal domain (alpha-NTD) region spans residues 1 to 231; sequence MRNITTSAYT…KQLSVFDKIT (231 aa). Residues 248-337 are alpha C-terminal domain (alpha-CTD); sequence NTKLLQNITD…IAELKAQNEG (90 aa).

This sequence belongs to the RNA polymerase alpha chain family. In terms of assembly, homodimer. The RNAP catalytic core consists of 2 alpha, 1 beta, 1 beta' and 1 omega subunit. When a sigma factor is associated with the core the holoenzyme is formed, which can initiate transcription.

The catalysed reaction is RNA(n) + a ribonucleoside 5'-triphosphate = RNA(n+1) + diphosphate. Its function is as follows. DNA-dependent RNA polymerase catalyzes the transcription of DNA into RNA using the four ribonucleoside triphosphates as substrates. The chain is DNA-directed RNA polymerase subunit alpha from Campylobacter jejuni subsp. jejuni serotype O:6 (strain 81116 / NCTC 11828).